Consider the following 476-residue polypeptide: RuvB-like helicase 2 (476 aa).

Residue V72–T80 coordinates ATP.

It belongs to the RuvB family. As to quaternary structure, may form heterododecamers with RVB1. Component of the SWR1 chromatin remodeling complex, the INO80 chromatin remodeling complex, and of the R2TP complex.

The protein localises to the nucleus. The catalysed reaction is ATP + H2O = ADP + phosphate + H(+). Functionally, DNA helicase which participates in several chromatin remodeling complexes, including the SWR1 and the INO80 complexes. The SWR1 complex mediates the ATP-dependent exchange of histone H2A for the H2A variant HZT1 leading to transcriptional regulation of selected genes by chromatin remodeling. The INO80 complex remodels chromatin by shifting nucleosomes and is involved in DNA repair. Also involved in pre-rRNA processing. In Mycosarcoma maydis (Corn smut fungus), this protein is RuvB-like helicase 2 (RVB2).